We begin with the raw amino-acid sequence, 156 residues long: Terrestric acid biosynthesis cluster protein E (156 aa).

It functions in the pathway secondary metabolite biosynthesis. Part of the tra gene cluster that produces terrestric acid. The clavatol biosynthesis cluster cla and the terrestric acid cluster tra are both involved in the production of peniphenones and penilactones. The non-reducing PKS claF is responsible for the formation of clavatol from successive condensations of 3 malonyl-CoA units, presumably with a simple acetyl-CoA starter unit, and 2 methylation steps. The esterase claE probably collaborates with claF by catalyzing the hydrolysis of ACP-bound acyl intermediates to free the ACP from stalled intermediates. The clavatol oxidase claD then converts clavatol to hydroxyclavatol. Spontaneous dehydration of hydroxyclavatol leads to the accumulation of the highly active ortho-quinone methide. On the other hand, the PKS-NRPS hybrid traA is involved in the formation of crustosic acid, with the help of traB and traD. The polyketide synthase module (PKS) of traA is responsible for the synthesis of the polyketide backbone via the condensation of an acetyl-CoA starter unit with 3 malonyl-CoA units. The downstream nonribosomal peptide synthetase (NRPS) module then amidates the carboxyl end of the polyketide with L-malic acid. Because traA lacks a designated enoylreductase (ER) domain, the required activity is provided the enoyl reductase traG. Crustosic acid undergoes decarboxylation and isomerization to the terrestric acid, catalyzed by the 2-oxoglutarate-dependent dioxygenase traH. Both acids are further converted to the 2 gamma-butyrolactones (R)-5-methyltetronic acid and (S)-5-carboxylmethyltetronic acid, with involvement of the cytochrome P450 monooxygenase claJ. Spontaneous addition of the methide to these gamma-butyrolactones leads to peniphenone D and penilactone D, which undergo again stereospecific attacking by methide to give penilactones A and B. TraE seems not to be involved in the biosynthesis of peniphenones and penilactones in the conditions used to study its function. This Penicillium crustosum (Blue mold fungus) protein is Terrestric acid biosynthesis cluster protein E.